The following is a 116-amino-acid chain: uncharacterized protein (116 aa).

Residues 5–113 (EVKMVVLSTE…TGNGLVFYSP (109 aa)) form the VOC domain. Lys76 is covalently cross-linked (Isoglutamyl lysine isopeptide (Lys-Gln) (interchain with Q-Cter in protein Pup)).

This is an uncharacterized protein from Mycolicibacterium smegmatis (strain ATCC 700084 / mc(2)155) (Mycobacterium smegmatis).